We begin with the raw amino-acid sequence, 129 residues long: UPF0325 protein ECA1027 (129 aa).

The protein belongs to the UPF0325 family.

The protein is UPF0325 protein ECA1027 of Pectobacterium atrosepticum (strain SCRI 1043 / ATCC BAA-672) (Erwinia carotovora subsp. atroseptica).